The following is a 475-amino-acid chain: uncharacterized protein (475 aa).

The tract at residues 42 to 292 (NLQNSLTGKT…NTRKGQRHNN (251 aa)) is disordered. 2 stretches are compositionally biased toward basic and acidic residues: residues 59 to 72 (EANHTSSDKSKSED) and 119 to 134 (IAEKQVEDRKLSDDSQ). Composition is skewed to polar residues over residues 150–159 (ITPNFTHTPI) and 220–242 (NNTFGSQTVSSANGKEVPQTSED). Residues 243-263 (SSSQAPHHSSSSGHAPSQQGG) are compositionally biased toward low complexity. Basic residues predominate over residues 277-289 (FHHKGRNTRKGQR). One can recognise an HTH La-type RNA-binding domain in the interval 319 to 408 (NPYLCDVQAF…MSIKVRRKET (90 aa)). Phosphothreonine is present on threonine 408. Serine 410 carries the post-translational modification Phosphoserine.

The protein resides in the cytoplasm. This is an uncharacterized protein from Schizosaccharomyces pombe (strain 972 / ATCC 24843) (Fission yeast).